The sequence spans 252 residues: DNA repair protein RecO (252 aa).

The protein belongs to the RecO family.

Its function is as follows. Involved in DNA repair and RecF pathway recombination. The chain is DNA repair protein RecO from Rhodospirillum rubrum (strain ATCC 11170 / ATH 1.1.1 / DSM 467 / LMG 4362 / NCIMB 8255 / S1).